A 638-amino-acid chain; its full sequence is ATP-dependent zinc metalloprotease FtsH (638 aa).

The Cytoplasmic portion of the chain corresponds to Met1 to Thr7. A helical membrane pass occupies residues Ile8–Gly28. The Periplasmic segment spans residues Asn29–Leu102. The helical transmembrane segment at Trp103–Phe123 threads the bilayer. The Cytoplasmic portion of the chain corresponds to Met124–Ala638. Gly195–Thr202 lines the ATP pocket. Position 417 (His417) interacts with Zn(2+). Glu418 is an active-site residue. 2 residues coordinate Zn(2+): His421 and Asp493. The disordered stretch occupies residues Gly596–Ala638. Residues Ala614–Asp625 show a composition bias toward basic and acidic residues.

This sequence in the central section; belongs to the AAA ATPase family. It in the C-terminal section; belongs to the peptidase M41 family. In terms of assembly, homohexamer. Requires Zn(2+) as cofactor.

It localises to the cell inner membrane. Functionally, acts as a processive, ATP-dependent zinc metallopeptidase for both cytoplasmic and membrane proteins. Plays a role in the quality control of integral membrane proteins. The protein is ATP-dependent zinc metalloprotease FtsH of Myxococcus xanthus (strain DK1622).